Consider the following 235-residue polypeptide: UPF0749 protein YlxX (235 aa).

The helical transmembrane segment at 6 to 26 threads the bilayer; the sequence is SFISISVLMVIFGLMISVQFN.

The protein belongs to the UPF0749 family.

Its subcellular location is the cell membrane. This is UPF0749 protein YlxX (ylxX) from Bacillus subtilis (strain 168).